The sequence spans 535 residues: Flavin-containing monooxygenase iboF (535 aa).

An N-terminal signal peptide occupies residues 1–24 (MFSLRPTALVSLSVVLFSIQETLS). FAD is bound at residue 60 to 65 (GAGPSG). Asn-134, Asn-243, and Asn-300 each carry an N-linked (GlcNAc...) asparagine glycan. 307–312 (GAAASG) serves as a coordination point for NADP(+). 3 N-linked (GlcNAc...) asparagine glycosylation sites follow: Asn-356, Asn-382, and Asn-410.

Belongs to the FMO family. FAD is required as a cofactor.

Its pathway is secondary metabolite biosynthesis. Its function is as follows. Flavin-containing monooxygenase; part of the gene cluster that mediates the biosynthesis of the psychoactive metabolites ibotenic acid and muscimol. The first committed step is glutamate hydroxylation by the 2-oxoglutarate-dependent dioxygenase iboH, and the last step is decarboxylation of ibotenic acid to muscimol by the decarboxylase iboD. The order of the intermediate reactions is somewhat ambiguous. IboA likely activates the carboxylic acid at position 5 to introduce an amide bond, and the flavin monooxygenase iboF generates the N-O bond. There are several options for the latter step. One option is that iboF directly hydroxylates the amide nitrogen formed by iboA to produce a hydroxamic acid species. Another option is that iboF hydroxylates an external N-containing compound, whose resulting N-O bond is subsequently introduced into the hydroxyglutamate scaffold. The paralogous PLP-dependent cystathionine gamma-synthase-like enzymes iboG1 and iboG2 are likely involved in substitution of the OH group at position 3 by the O-N moiety. The first cyclic intermediate is most probably tricholomic acid which is likely desaturated to ibotenic acid by the cytochrome P450 monooxygenase iboC. The chain is Flavin-containing monooxygenase iboF from Amanita muscaria (strain Koide BX008).